Here is a 583-residue protein sequence, read N- to C-terminus: Proteasome-associated ATPase (583 aa).

Positions 2-90 (ASREDRDAAN…REEVDRLAQP (89 aa)) form a coiled coil. 271 to 276 (GCGKTL) lines the ATP pocket. The tract at residues 582–583 (YL) is docks into pockets in the proteasome alpha-ring.

The protein belongs to the AAA ATPase family. As to quaternary structure, homohexamer. Assembles into a hexameric ring structure that caps the 20S proteasome core. Strongly interacts with the prokaryotic ubiquitin-like protein Pup through a hydrophobic interface; the interacting region of ARC lies in its N-terminal coiled-coil domain. There is one Pup binding site per ARC hexamer ring. Upon ATP-binding, the C-terminus of ARC interacts with the alpha-rings of the proteasome core, possibly by binding to the intersubunit pockets.

Its pathway is protein degradation; proteasomal Pup-dependent pathway. In terms of biological role, ATPase which is responsible for recognizing, binding, unfolding and translocation of pupylated proteins into the bacterial 20S proteasome core particle. May be essential for opening the gate of the 20S proteasome via an interaction with its C-terminus, thereby allowing substrate entry and access to the site of proteolysis. Thus, the C-termini of the proteasomal ATPase may function like a 'key in a lock' to induce gate opening and therefore regulate proteolysis. This is Proteasome-associated ATPase from Acidothermus cellulolyticus (strain ATCC 43068 / DSM 8971 / 11B).